Here is a 557-residue protein sequence, read N- to C-terminus: Small ribosomal subunit protein bS1 (557 aa).

S1 motif domains follow at residues 21-87 (GSIV…LSRE), 105-171 (SATV…VSRR), 192-260 (GMEV…LGLK), 277-347 (GTKL…LGLK), 364-434 (GDRV…LGVK), and 451-520 (GAIV…LSIR).

This sequence belongs to the bacterial ribosomal protein bS1 family.

Its function is as follows. Binds mRNA; thus facilitating recognition of the initiation point. It is needed to translate mRNA with a short Shine-Dalgarno (SD) purine-rich sequence. The sequence is that of Small ribosomal subunit protein bS1 (rpsA) from Dickeya dadantii (strain 3937) (Erwinia chrysanthemi (strain 3937)).